We begin with the raw amino-acid sequence, 547 residues long: Phosphomethylpyrimidine synthase (547 aa).

Residues 1-15 show a composition bias toward polar residues; it reads MTETLSKTTEPSVTT. Residues 1–36 form a disordered region; the sequence is MTETLSKTTEPSVTTGPIPGSSKAYREVANPDGGPS. Residues Asn-150, Met-179, Tyr-208, His-244, 264-266, 305-308, and Glu-344 contribute to the substrate site; these read SRG and DGLR. His-348 lines the Zn(2+) pocket. Residue Tyr-371 participates in substrate binding. His-412 contacts Zn(2+). The [4Fe-4S] cluster site is built by Cys-492, Cys-495, and Cys-500.

It belongs to the ThiC family. The cofactor is [4Fe-4S] cluster.

The enzyme catalyses 5-amino-1-(5-phospho-beta-D-ribosyl)imidazole + S-adenosyl-L-methionine = 4-amino-2-methyl-5-(phosphooxymethyl)pyrimidine + CO + 5'-deoxyadenosine + formate + L-methionine + 3 H(+). The protein operates within cofactor biosynthesis; thiamine diphosphate biosynthesis. Its function is as follows. Catalyzes the synthesis of the hydroxymethylpyrimidine phosphate (HMP-P) moiety of thiamine from aminoimidazole ribotide (AIR) in a radical S-adenosyl-L-methionine (SAM)-dependent reaction. This Mycobacterium leprae (strain Br4923) protein is Phosphomethylpyrimidine synthase.